Reading from the N-terminus, the 509-residue chain is Src substrate cortactin (509 aa).

The segment at 1 to 28 (MWKASAGHAVSITQDDGGADDWETDPDF) is disordered. Over residues 17–28 (GGADDWETDPDF) the composition is skewed to acidic residues. Cortactin repeat units lie at residues 80–116 (ASHG…SQVD), 117–153 (SVRG…SQKD), 154–190 (YSSG…SQKD), 191–227 (YSKG…SQKD), and 228–264 (YVKG…SQKD). Residues lysine 87 and lysine 107 each carry the N6-acetyllysine modification. Position 113 is a phosphoserine (serine 113). The residue at position 119 (arginine 119) is an Omega-N-methylarginine. Position 124 is an N6-acetyllysine (lysine 124). At lysine 144 the chain carries N6-acetyllysine; alternate. Residue lysine 144 forms a Glycyl lysine isopeptide (Lys-Gly) (interchain with G-Cter in SUMO1); alternate linkage. Lysine 144 participates in a covalent cross-link: Glycyl lysine isopeptide (Lys-Gly) (interchain with G-Cter in SUMO2); alternate. Phosphoserine is present on serine 150. An N6-acetyllysine mark is found at lysine 152, lysine 161, and lysine 171. Lysine 181 is subject to N6-acetyllysine; alternate. Lysine 181 is covalently cross-linked (Glycyl lysine isopeptide (Lys-Gly) (interchain with G-Cter in SUMO1); alternate). A Glycyl lysine isopeptide (Lys-Gly) (interchain with G-Cter in SUMO2); alternate cross-link involves residue lysine 181. An N6-acetyllysine mark is found at lysine 193 and lysine 198. Residue lysine 218 forms a Glycyl lysine isopeptide (Lys-Gly) (interchain with G-Cter in SUMO1) linkage. Lysine 235 bears the N6-acetyllysine mark. Serine 261 is modified (phosphoserine). Residues 265–287 (YAKGFGGKYGVQKDRMDKNASTF) form a Cortactin 6; truncated repeat. Residues lysine 267, lysine 272, lysine 277, and lysine 309 each carry the N6-acetyllysine modification. Residues 311–364 (SNIRANFENLAKEREQEDRRKAEAERAQRMAQERQEQEEARRKLEEQARAKKQT) are a coiled coil. Residues 318–409 (ENLAKEREQE…EPEPEYSTEA (92 aa)) form a disordered region. Positions 320–359 (LAKEREQEDRRKAEAERAQRMAQERQEQEEARRKLEEQAR) are enriched in basic and acidic residues. Threonine 364 bears the Phosphothreonine mark. Residues serine 368, serine 370, serine 380, and serine 381 each carry the phosphoserine modification. Tyrosine 384 carries the post-translational modification Phosphotyrosine; by FAK1. Positions 393-406 (EPSYGSSEPEPEYS) are enriched in low complexity. Tyrosine 405 is subject to Phosphotyrosine. The residue at position 406 (serine 406) is a Phosphoserine. 2 positions are modified to phosphotyrosine; by FAK1: tyrosine 429 and tyrosine 445. Residues tyrosine 445 and tyrosine 448 each carry the phosphotyrosine; by SRC modification. In terms of domain architecture, SH3 spans 451 to 509 (DLGITAIALYDYQAAGDDEISFDPDDVITNIEMIDDGWWRGVCKGRYGLFPANYVELRQ).

As to quaternary structure, part of a complex composed of NEDD9, AURKA and CTTN; within the complex NEDD9 acts as a scaffold protein and is required for complex formation. Interacts (via N-terminus) with NEDD9. Identified in a complex containing FGFR4, NCAM1, CDH2, PLCG1, FRS2, SRC, SHC1, GAP43 and CTTN. Forms a complex with ABL1 and MYLK. Interacts with SHANK2 and SHANK3 (via its SH3 domain). Interacts with PLXDC2 and SRCIN1. Interacts with SAMSN1 (via SH3 domain). Interacts (via SH3 domain) with ASAP1 (via Pro-rich region). Interacts with FER. Interacts with FGD1. Interacts with ABL2. Interacts with CTTNBP2NL; this interaction may target CTTN to stress fibers. Interacts with CTTNBP2; this interaction may target CTTN at the cell cortex or dendritic spines. Interacts (via SH3 domain) with DNM2. Interacts with ACTN1. Interacts with KCNA2 (via non-phosphorylated C-terminus). Interacts with PTK2/FAK1. Interacts with KCNH1. Interacts (via SH3 domain) with DIP2A (via N-terminus); the interaction enhances CTTN acetylation and is required for proper synaptic transmission. Interacts with XIRP1 (via N-terminus); the interaction promotes CTTN localization to intercalated disks in cardiomyocytes. In terms of processing, acetylated. Post-translationally, phosphorylated by FER. Phosphorylated in response to FGR activation. Phosphorylation by SRC promotes MYLK binding. Tyrosine phosphorylation in transformed cells may contribute to cellular growth regulation and transformation. Phosphorylated by PKN2 at both serine and threonine residues in a GTP-bound Rac1-dependent manner in hyaluronan-induced astrocytes and hence down-regulated CTTN ability to associate with filamentous actin. Phosphorylated on tyrosine residues in response to CHRM1 activation. Phosphorylated by PTK2/FAK1 in response to cell adhesion. As to expression, detected in liver (at protein level).

It localises to the cytoplasm. The protein localises to the cytoskeleton. Its subcellular location is the cell projection. It is found in the lamellipodium. The protein resides in the ruffle. It localises to the dendrite. The protein localises to the cell membrane. Its subcellular location is the podosome. It is found in the cell junction. The protein resides in the focal adhesion. It localises to the membrane. The protein localises to the clathrin-coated pit. Its subcellular location is the dendritic spine. It is found in the cell cortex. The protein resides in the endoplasmic reticulum. Contributes to the organization of the actin cytoskeleton and cell shape. Plays a role in the formation of lamellipodia and in cell migration. Plays a role in the regulation of neuron morphology, axon growth and formation of neuronal growth cones. Through its interaction with CTTNBP2, involved in the regulation of neuronal spine density. Plays a role in focal adhesion assembly and turnover. In complex with ABL1 and MYLK regulates cortical actin-based cytoskeletal rearrangement critical to sphingosine 1-phosphate (S1P)-mediated endothelial cell (EC) barrier enhancement. Plays a role in intracellular protein transport and endocytosis, and in modulating the levels of potassium channels present at the cell membrane. Plays a role in receptor-mediated endocytosis via clathrin-coated pits. Required for stabilization of KCNH1 channels at the cell membrane. This chain is Src substrate cortactin, found in Rattus norvegicus (Rat).